The following is a 435-amino-acid chain: Tol-Pal system protein TolB (435 aa).

A signal peptide spans 1–28; the sequence is MVKCSLIRALMVIAGLIGAAAFTTPANA. The tract at residues 288 to 310 is disordered; it reads STAAIDTSPSYSPDGARVSFESD.

It belongs to the TolB family. In terms of assembly, the Tol-Pal system is composed of five core proteins: the inner membrane proteins TolA, TolQ and TolR, the periplasmic protein TolB and the outer membrane protein Pal. They form a network linking the inner and outer membranes and the peptidoglycan layer.

The protein resides in the periplasm. Functionally, part of the Tol-Pal system, which plays a role in outer membrane invagination during cell division and is important for maintaining outer membrane integrity. This is Tol-Pal system protein TolB from Rhizobium leguminosarum bv. trifolii (strain WSM2304).